Here is a 422-residue protein sequence, read N- to C-terminus: UDP-N-acetylglucosamine 1-carboxyvinyltransferase (422 aa).

Position 22-23 (22-23 (KN)) interacts with phosphoenolpyruvate. Arg-95 lines the UDP-N-acetyl-alpha-D-glucosamine pocket. Residue Cys-119 is the Proton donor of the active site. Position 119 is a 2-(S-cysteinyl)pyruvic acid O-phosphothioketal (Cys-119). Residues 124 to 128 (RPIDQ), Asp-309, and Val-331 contribute to the UDP-N-acetyl-alpha-D-glucosamine site.

The protein belongs to the EPSP synthase family. MurA subfamily.

It localises to the cytoplasm. It carries out the reaction phosphoenolpyruvate + UDP-N-acetyl-alpha-D-glucosamine = UDP-N-acetyl-3-O-(1-carboxyvinyl)-alpha-D-glucosamine + phosphate. The protein operates within cell wall biogenesis; peptidoglycan biosynthesis. Its function is as follows. Cell wall formation. Adds enolpyruvyl to UDP-N-acetylglucosamine. The polypeptide is UDP-N-acetylglucosamine 1-carboxyvinyltransferase (Anaeromyxobacter sp. (strain Fw109-5)).